An 854-amino-acid polypeptide reads, in one-letter code: MTDSQNFESHTPMMQQYLKLKAEHPEILLFYRMGDFYELFFDDAKKASRLLDISLTKRGQSAGQPIPMAGVPHHAVENYLAKLVQLGESVAICEQIGDPATSKGPVERKVIRIVTPGTVTDEALLEERQDNLLAAIWQDKNGAFGYATLDITSGRFRVTEMPDSESMAAELQRTHPAELLYPETFESMALIERQQGLRRRPIWEFECETAKQQLNLQFGTRDLTGFGVENARLALCAAGCLLQYVKDTQRTGLPHIRSITMERPQDTIILDAATRRNLELTQNLAGGCDNTLASVLDLCVTPMGSRMLKRWIHTPLRQREQLIKRQDAISALQPLYFELQPFLRQVGDLERVLARLALRSARPRDLSRMRHAFQQYQDIHQVLDQADMPYIKELQQRISQFDELRELLENAIVETPPVLVRDGGVIASGYNAELDEWRALADGASDYLEKLEVREREKWGIDTLKVGFNGVHGYYIQVSRGQSNLVPMHYVRRQTLKNAERYIIPELKEYEDKVLTSKGKALAIEKMLYEELFEKLLPHLTALQTSAEALAETDVLANLAERAESLNYTRPELTEKTGIQITGGRHPVVEQVLSEPFISNPLQLAPQRRLLIITGPNMGGKSTYMRQAALITLLAYIGSFVPAEKAVIGPIDRIFTRVGASDDLASGRSTFMVEMTETANILHNATENSLVLMDEIGRGTSTYDGLSLAWACAENLANRIKAMTLFATHYFELTTLPEKLEGTANIHLDAVEHGETIAFMHSVQEGAASKSYGLAVAALAGVPKEVIRRAKQKLKELETLSGHSGASHVETSQLMLLADIEPSEVELALNKIDPDSLTPKQALELLYHLKELNK.

615-622 is an ATP binding site; the sequence is GPNMGGKS.

Belongs to the DNA mismatch repair MutS family.

Functionally, this protein is involved in the repair of mismatches in DNA. It is possible that it carries out the mismatch recognition step. This protein has a weak ATPase activity. The polypeptide is DNA mismatch repair protein MutS (Proteus mirabilis (strain HI4320)).